Here is a 241-residue protein sequence, read N- to C-terminus: Orotidine 5'-phosphate decarboxylase (241 aa).

Substrate-binding positions include aspartate 16, lysine 37, 64–73 (DLKFHDIPTT), threonine 128, arginine 190, glutamine 199, glycine 219, and arginine 220. Catalysis depends on lysine 66, which acts as the Proton donor.

This sequence belongs to the OMP decarboxylase family. Type 1 subfamily. As to quaternary structure, homodimer.

It catalyses the reaction orotidine 5'-phosphate + H(+) = UMP + CO2. It functions in the pathway pyrimidine metabolism; UMP biosynthesis via de novo pathway; UMP from orotate: step 2/2. Functionally, catalyzes the decarboxylation of orotidine 5'-monophosphate (OMP) to uridine 5'-monophosphate (UMP). This chain is Orotidine 5'-phosphate decarboxylase, found in Prochlorococcus marinus (strain NATL1A).